Here is a 345-residue protein sequence, read N- to C-terminus: Uroporphyrinogen decarboxylase (345 aa).

Residues 30-34 (RQAGR), Asp79, Tyr154, Ser209, and His322 each bind substrate.

The protein belongs to the uroporphyrinogen decarboxylase family. As to quaternary structure, homodimer.

It is found in the cytoplasm. The catalysed reaction is uroporphyrinogen III + 4 H(+) = coproporphyrinogen III + 4 CO2. Its pathway is porphyrin-containing compound metabolism; protoporphyrin-IX biosynthesis; coproporphyrinogen-III from 5-aminolevulinate: step 4/4. Functionally, catalyzes the decarboxylation of four acetate groups of uroporphyrinogen-III to yield coproporphyrinogen-III. In Nocardioides sp. (strain ATCC BAA-499 / JS614), this protein is Uroporphyrinogen decarboxylase.